A 38-amino-acid polypeptide reads, in one-letter code: Photosystem II reaction center protein L (38 aa).

The helical transmembrane segment at 17–37 threads the bilayer; it reads SLYWGLLCIFVLAILFSSYFF.

It belongs to the PsbL family. PSII is composed of 1 copy each of membrane proteins PsbA, PsbB, PsbC, PsbD, PsbE, PsbF, PsbH, PsbI, PsbJ, PsbK, PsbL, PsbM, PsbT, PsbX, PsbY, PsbZ, Psb30/Ycf12, at least 3 peripheral proteins of the oxygen-evolving complex and a large number of cofactors. It forms dimeric complexes.

The protein resides in the plastid. It localises to the chloroplast thylakoid membrane. In terms of biological role, one of the components of the core complex of photosystem II (PSII). PSII is a light-driven water:plastoquinone oxidoreductase that uses light energy to abstract electrons from H(2)O, generating O(2) and a proton gradient subsequently used for ATP formation. It consists of a core antenna complex that captures photons, and an electron transfer chain that converts photonic excitation into a charge separation. This subunit is found at the monomer-monomer interface and is required for correct PSII assembly and/or dimerization. This chain is Photosystem II reaction center protein L, found in Cyanidioschyzon merolae (strain NIES-3377 / 10D) (Unicellular red alga).